Here is a 368-residue protein sequence, read N- to C-terminus: DNA replication and repair protein RecF (368 aa).

Residue 30–37 (GNNAQGKT) participates in ATP binding.

This sequence belongs to the RecF family.

The protein localises to the cytoplasm. Its function is as follows. The RecF protein is involved in DNA metabolism; it is required for DNA replication and normal SOS inducibility. RecF binds preferentially to single-stranded, linear DNA. It also seems to bind ATP. This Streptococcus pyogenes serotype M12 (strain MGAS9429) protein is DNA replication and repair protein RecF.